A 429-amino-acid polypeptide reads, in one-letter code: Glutamate-1-semialdehyde 2,1-aminomutase 2 (429 aa).

Lys-268 carries the N6-(pyridoxal phosphate)lysine modification.

It belongs to the class-III pyridoxal-phosphate-dependent aminotransferase family. HemL subfamily. In terms of assembly, homodimer. Requires pyridoxal 5'-phosphate as cofactor.

Its subcellular location is the cytoplasm. It catalyses the reaction (S)-4-amino-5-oxopentanoate = 5-aminolevulinate. It functions in the pathway porphyrin-containing compound metabolism; protoporphyrin-IX biosynthesis; 5-aminolevulinate from L-glutamyl-tRNA(Glu): step 2/2. The chain is Glutamate-1-semialdehyde 2,1-aminomutase 2 from Staphylococcus aureus (strain USA300).